A 129-amino-acid chain; its full sequence is MAKPAARTRKKVKKTVVDGIAHIHASFNNTIVTITDRQGNALSWATSGGSGFRGSRKSTPFAAQIAAERAGQAALEYGLKNLDVNVKGPGPGRESAVRALNACGYKIASITDVTPIPHNGCRPPKKRRV.

The protein belongs to the universal ribosomal protein uS11 family. As to quaternary structure, part of the 30S ribosomal subunit. Interacts with proteins S7 and S18. Binds to IF-3.

Functionally, located on the platform of the 30S subunit, it bridges several disparate RNA helices of the 16S rRNA. Forms part of the Shine-Dalgarno cleft in the 70S ribosome. The protein is Small ribosomal subunit protein uS11 of Ectopseudomonas mendocina (strain ymp) (Pseudomonas mendocina).